The following is a 296-amino-acid chain: Nucleotide-binding protein MGAS2096_Spy0550 (296 aa).

13–20 (GMSGAGKT) is a binding site for ATP. 63-66 (DMRS) contacts GTP.

It belongs to the RapZ-like family.

Its function is as follows. Displays ATPase and GTPase activities. This is Nucleotide-binding protein MGAS2096_Spy0550 from Streptococcus pyogenes serotype M12 (strain MGAS2096).